Reading from the N-terminus, the 80-residue chain is Small ribosomal subunit protein uS17 (80 aa).

This sequence belongs to the universal ribosomal protein uS17 family. Part of the 30S ribosomal subunit.

One of the primary rRNA binding proteins, it binds specifically to the 5'-end of 16S ribosomal RNA. In Brucella abortus (strain S19), this protein is Small ribosomal subunit protein uS17.